Consider the following 317-residue polypeptide: MTTALDQLKQYTTVVADTGDFQQLAQYKPQDATTNPSLILKAVQKDAYRPILEKTVRDHAGESVGFIIDRLLIAFGTEILKLIPGRVSTEVDARLSFDTQRSIDKGREIIKLYEAAGIGRERVLIKLASTWEGIRAAEVLQREGIRCNMTLLFSLVQAAACAEAGAQLISPFVGRIYDWYKKQKGAEWDEAKDGGANDPGVQSVRRIYTYYKQFGYATEVMGASFRTTSQITELAGCDLLTISPDLLQKLHDSAETVARKLSPDAAKDAQLERVAIDESSFRFQLNDDAMATEKLAEGIRLFSADAVKLEKMIDALR.

Lys126 serves as the catalytic Schiff-base intermediate with substrate.

It belongs to the transaldolase family. Type 1 subfamily. Homodimer.

The protein resides in the cytoplasm. It carries out the reaction D-sedoheptulose 7-phosphate + D-glyceraldehyde 3-phosphate = D-erythrose 4-phosphate + beta-D-fructose 6-phosphate. The protein operates within carbohydrate degradation; pentose phosphate pathway; D-glyceraldehyde 3-phosphate and beta-D-fructose 6-phosphate from D-ribose 5-phosphate and D-xylulose 5-phosphate (non-oxidative stage): step 2/3. Its function is as follows. Transaldolase is important for the balance of metabolites in the pentose-phosphate pathway. The sequence is that of Transaldolase from Burkholderia thailandensis (strain ATCC 700388 / DSM 13276 / CCUG 48851 / CIP 106301 / E264).